The chain runs to 680 residues: Transketolase 1 (680 aa).

Residue His-30 participates in substrate binding. Residues His-69 and 116-118 (GPL) each bind thiamine diphosphate. Mg(2+) is bound at residue Asp-157. Thiamine diphosphate-binding residues include Gly-158 and Asn-187. Mg(2+) is bound by residues Asn-187 and Ile-189. Substrate is bound at residue His-263. His-263 contacts thiamine diphosphate. Residues Ser-286 and Ser-335 each carry the phosphoserine modification. Positions 359 and 386 each coordinate substrate. The residue at position 402 (Ser-402) is a Phosphoserine. 2 residues coordinate thiamine diphosphate: Glu-418 and Phe-445. Glu-418 functions as the Proton donor in the catalytic mechanism. The substrate site is built by His-469 and Asp-477. Ser-492 carries the phosphoserine modification. Substrate is bound at residue Arg-528. A Glycyl lysine isopeptide (Lys-Gly) (interchain with G-Cter in ubiquitin) cross-link involves residue Lys-647.

It belongs to the transketolase family. In terms of assembly, homodimer. Mg(2+) is required as a cofactor. It depends on Ca(2+) as a cofactor. Mn(2+) serves as cofactor. The cofactor is Co(2+). Requires thiamine diphosphate as cofactor.

It catalyses the reaction D-sedoheptulose 7-phosphate + D-glyceraldehyde 3-phosphate = aldehydo-D-ribose 5-phosphate + D-xylulose 5-phosphate. Functionally, catalyzes the transfer of a two-carbon ketol group from a ketose donor to an aldose acceptor, via a covalent intermediate with the cofactor thiamine pyrophosphate. This Saccharomyces cerevisiae (strain ATCC 204508 / S288c) (Baker's yeast) protein is Transketolase 1 (TKL1).